The sequence spans 483 residues: Probable glycine dehydrogenase (decarboxylating) subunit 2 (483 aa).

The disordered stretch occupies residues 1–24; the sequence is MLIFDHSRPGRTAAAQLPATGGDL. Lysine 264 is subject to N6-(pyridoxal phosphate)lysine.

This sequence belongs to the GcvP family. C-terminal subunit subfamily. As to quaternary structure, the glycine cleavage system is composed of four proteins: P, T, L and H. In this organism, the P 'protein' is a heterodimer of two subunits. The cofactor is pyridoxal 5'-phosphate.

The enzyme catalyses N(6)-[(R)-lipoyl]-L-lysyl-[glycine-cleavage complex H protein] + glycine + H(+) = N(6)-[(R)-S(8)-aminomethyldihydrolipoyl]-L-lysyl-[glycine-cleavage complex H protein] + CO2. In terms of biological role, the glycine cleavage system catalyzes the degradation of glycine. The P protein binds the alpha-amino group of glycine through its pyridoxal phosphate cofactor; CO(2) is released and the remaining methylamine moiety is then transferred to the lipoamide cofactor of the H protein. In Thiobacillus denitrificans (strain ATCC 25259 / T1), this protein is Probable glycine dehydrogenase (decarboxylating) subunit 2.